The following is a 134-amino-acid chain: T-cell receptor alpha chain V region RL-5 (134 aa).

A signal peptide spans 1–20 (MFSASCSVTVVVLLITVRRT). The tract at residues 21–114 (NGASVTQTEG…DSAVYYCALR (94 aa)) is v segment. The segment at 115–134 (RGASNKLTLGTGTLLKVELN) is j segment. An N-linked (GlcNAc...) asparagine glycan is attached at Asn-134.

Rearrangement with the C region would elongate the sequence with Ile-Thr-; which creates a potential N-glycosylation site at Asn-134.

This is T-cell receptor alpha chain V region RL-5 from Oryctolagus cuniculus (Rabbit).